The chain runs to 366 residues: Beta sliding clamp (366 aa).

Belongs to the beta sliding clamp family. Forms a ring-shaped head-to-tail homodimer around DNA which binds and tethers DNA polymerases and other proteins to the DNA. The DNA replisome complex has a single clamp-loading complex (3 tau and 1 each of delta, delta', psi and chi subunits) which binds 3 Pol III cores (1 core on the leading strand and 2 on the lagging strand) each with a beta sliding clamp dimer. Additional proteins in the replisome are other copies of gamma, psi and chi, Ssb, DNA helicase and RNA primase.

It localises to the cytoplasm. Confers DNA tethering and processivity to DNA polymerases and other proteins. Acts as a clamp, forming a ring around DNA (a reaction catalyzed by the clamp-loading complex) which diffuses in an ATP-independent manner freely and bidirectionally along dsDNA. Initially characterized for its ability to contact the catalytic subunit of DNA polymerase III (Pol III), a complex, multichain enzyme responsible for most of the replicative synthesis in bacteria; Pol III exhibits 3'-5' exonuclease proofreading activity. The beta chain is required for initiation of replication as well as for processivity of DNA replication. This Buchnera aphidicola subsp. Acyrthosiphon pisum (strain APS) (Acyrthosiphon pisum symbiotic bacterium) protein is Beta sliding clamp (dnaN).